We begin with the raw amino-acid sequence, 962 residues long: MREESWEDHDTIQLTAQRKYLAEVQALETLLTRELSAFLTEPGSKKTNIINRITGKTYALPSTELLRLYEHLEQCRKQGALMYFLERQGTYSGLMLDYDLKLNTNAVPPLEPPALSRLCHRIFVHIKNSSVLPEGSHKIHFFFTLKPEVVQGKYGFHVLIPGLKLAASTKKSIIGSLQHDATVQKILHEQGVANPESCLDPHSASVPSLLYGSSKLNHKPYQLKTGFELVFDSSDPDYIPIHQIKNIESYNLVSELSLTNEQGSLVRPVYCAADIAAEKEEEIPTDDHSLSILMLHDPEARYLHKILNLLPPEYYVEYPLWSNVVFALANTSANYRPLAEWFSQKCPEKWNTGGKEKLEKLWNDASRHTEKKITKRSIMYWAHKHAPQQYKEIVEQGYFSILAEYVYSYNGMLEHYMIAKVIYAMMGNKFVVDVDSNGKYVWFEFVLPGQPMNQGEIWKWRKEVNPDELHIYISENFSRVMDRITEHIKYHLSQPHETNILNYYKKLLKAFERSKSKIFNDSFKKGVIRQAEFLFRQRSFIQTLDTNPHLLGVGNGVLSIETIPAKLINHFHEHPIHQYTHICYVPFNPENPWTKLLLNALQDIIPELDARLWIMFYLSTAIFRGLKEALMLLWLGGGCNGKTFLMRLVAMVLGDHYASKLNISLLTSCRETAEKPNSAFMRLKGRGYGYFEETNKSEVLNTSRLKEMVNPGDVTARELNQKQESFQMTATMVAASNYNFIIDTTDHGTWRRLRHYRSKVKFCHNPDPGNPYEKKEDPRFIHEYIMDPDCQNAFFSILVYFWEKLQKEYNGQIKKVFCPTIESETEAYRKSQDTLHRFITERVVESPSAETVYNLSEVVTAYAEWYNANINVKRHIALELSQELENSVLEKYLQWSPNKTRILKGCRILHKFETLQPGESYIGVSTAGTLLNTPICEPKNKWWEWSPNLSAPPEKEASAPTP.

The region spanning 607–775 (ELDARLWIMF…PDPGNPYEKK (169 aa)) is the SF3 helicase domain. An ATP-binding site is contributed by 636–643 (GGGCNGKT).

It belongs to the asfivirus helicase C962R family.

The protein is Putative primase C962R of African swine fever virus (strain Badajoz 1971 Vero-adapted) (Ba71V).